The chain runs to 103 residues: UPF0145 protein BT9727_3206 (103 aa).

It belongs to the UPF0145 family.

In Bacillus thuringiensis subsp. konkukian (strain 97-27), this protein is UPF0145 protein BT9727_3206.